Consider the following 666-residue polypeptide: ATP-dependent zinc metalloprotease FtsH (666 aa).

The interval 1–23 is disordered; sequence MSREVTSGLPQDKPTGSAPPPPP. Over 1-27 the chain is Cytoplasmic; sequence MSREVTSGLPQDKPTGSAPPPPPPWRR. Residues 28–48 traverse the membrane as a helical segment; sequence WLLPIGLLVSLVLLFTFPMRP. Topologically, residues 49-125 are extracellular; sequence SSGKTLTYSE…RPPGPSLASQ (77 aa). Residues 126–146 form a helical membrane-spanning segment; the sequence is VLAGVLSFLPFLLLLGLFAYS. The Cytoplasmic portion of the chain corresponds to 147-666; the sequence is GRRAGAGFLA…RTAASSDDLL (520 aa). An ATP-binding site is contributed by 219–226; sequence GPPGTGKT. Position 442 (H442) interacts with Zn(2+). The active site involves E443. Zn(2+)-binding residues include H446 and D518. Positions 626 to 666 are disordered; the sequence is PEEHREAAARHVRRPGIAAATGASMAGGSEPRTAASSDDLL. Residues 641–653 show a composition bias toward low complexity; sequence GIAAATGASMAGG.

It in the central section; belongs to the AAA ATPase family. This sequence in the C-terminal section; belongs to the peptidase M41 family. Homohexamer. The cofactor is Zn(2+).

It is found in the cell membrane. Its function is as follows. Acts as a processive, ATP-dependent zinc metallopeptidase for both cytoplasmic and membrane proteins. Plays a role in the quality control of integral membrane proteins. This Acidothermus cellulolyticus (strain ATCC 43068 / DSM 8971 / 11B) protein is ATP-dependent zinc metalloprotease FtsH.